The sequence spans 929 residues: Isoleucine--tRNA ligase (929 aa).

The 'HIGH' region signature appears at P58–H68. E563 is a binding site for L-isoleucyl-5'-AMP. The 'KMSKS' region motif lies at K605 to S609. Residue K608 coordinates ATP. Positions 892, 895, 912, and 915 each coordinate Zn(2+).

The protein belongs to the class-I aminoacyl-tRNA synthetase family. IleS type 1 subfamily. Monomer. The cofactor is Zn(2+).

The protein localises to the cytoplasm. The enzyme catalyses tRNA(Ile) + L-isoleucine + ATP = L-isoleucyl-tRNA(Ile) + AMP + diphosphate. In terms of biological role, catalyzes the attachment of isoleucine to tRNA(Ile). As IleRS can inadvertently accommodate and process structurally similar amino acids such as valine, to avoid such errors it has two additional distinct tRNA(Ile)-dependent editing activities. One activity is designated as 'pretransfer' editing and involves the hydrolysis of activated Val-AMP. The other activity is designated 'posttransfer' editing and involves deacylation of mischarged Val-tRNA(Ile). This chain is Isoleucine--tRNA ligase, found in Neisseria gonorrhoeae (strain ATCC 700825 / FA 1090).